Reading from the N-terminus, the 190-residue chain is Peptidyl-tRNA hydrolase (190 aa).

Residue phenylalanine 14 coordinates tRNA. Histidine 19 (proton acceptor) is an active-site residue. TRNA-binding residues include methionine 64, asparagine 66, and asparagine 112.

Belongs to the PTH family. In terms of assembly, monomer.

It is found in the cytoplasm. The catalysed reaction is an N-acyl-L-alpha-aminoacyl-tRNA + H2O = an N-acyl-L-amino acid + a tRNA + H(+). Hydrolyzes ribosome-free peptidyl-tRNAs (with 1 or more amino acids incorporated), which drop off the ribosome during protein synthesis, or as a result of ribosome stalling. In terms of biological role, catalyzes the release of premature peptidyl moieties from peptidyl-tRNA molecules trapped in stalled 50S ribosomal subunits, and thus maintains levels of free tRNAs and 50S ribosomes. The protein is Peptidyl-tRNA hydrolase of Staphylococcus aureus (strain Mu3 / ATCC 700698).